The sequence spans 983 residues: Ephrin type-A receptor 3 (983 aa).

An N-terminal signal peptide occupies residues 1-20; it reads MDCHLSILVLLGCCVLSCSG. The Extracellular portion of the chain corresponds to 21 to 540; the sequence is ELSPQPSNEV…SFSISGENSH (520 aa). In terms of domain architecture, Eph LBD spans 29 to 206; sequence EVNLLDSKTI…YFKKCPFTVK (178 aa). Residues Asn-231, Asn-336, Asn-390, Asn-403, and Asn-492 are each glycosylated (N-linked (GlcNAc...) asparagine). Fibronectin type-III domains are found at residues 324–434 and 435–530; these read PPSA…TNQA and APSP…TSPD. The chain crosses the membrane as a helical span at residues 541–564; sequence VVMIAISAAVAIIVLTVVTYVLVG. Residues 565–983 are Cytoplasmic-facing; sequence RFCGYHKSKH…TQSKNGPVPV (419 aa). A phosphotyrosine; by autocatalysis mark is found at Tyr-596 and Tyr-602. The Protein kinase domain occupies 621 to 882; it reads ISIDKVVGAG…QIVSILDKLI (262 aa). ATP contacts are provided by residues 628-633, Lys-653, and 700-706; these read GAGEFG and EYMENGS. A Phosphotyrosine; by autocatalysis modification is found at Tyr-701. The active-site Proton acceptor is Asp-746. 750 to 751 serves as a coordination point for ATP; the sequence is RN. Tyr-779 bears the Phosphotyrosine; by autocatalysis mark. In terms of domain architecture, SAM spans 911–975; it reads ATFHTTGDWL…ISTIKALETQ (65 aa). Tyr-937 carries the phosphotyrosine modification. Residues 981–983 carry the PDZ-binding motif; the sequence is VPV.

Belongs to the protein kinase superfamily. Tyr protein kinase family. Ephrin receptor subfamily. As to quaternary structure, heterotetramer upon binding of the ligand. The heterotetramer is composed of an ephrin dimer and a receptor dimer. Oligomerization is probably required to induce biological responses. Forms a ternary EFNA5-EPHA3-ADAM10 complex mediating EFNA5 extracellular domain shedding by ADAM10 which regulates the EFNA5-EPHA3 complex internalization and function. Interacts (phosphorylated) with PTPN1; dephosphorylates EPHA3 and may regulate its trafficking and function. Interacts (phosphorylated) with CRK; mediates EFNA5-EPHA3 signaling through RHOA GTPase activation. Interacts with NCK1 (via SH2 domain); mediates EFNA5-EPHA3 signaling. Post-translationally, autophosphorylates upon activation by EFNA5. Phosphorylation on Tyr-602 mediates interaction with NCK1. Dephosphorylated by PTPN1. Greatest levels of expression occurring in the brain, also detected in testis. Expressed in myogenic progenitor cells.

The protein resides in the cell membrane. It localises to the secreted. It carries out the reaction L-tyrosyl-[protein] + ATP = O-phospho-L-tyrosyl-[protein] + ADP + H(+). Functionally, receptor tyrosine kinase which binds promiscuously membrane-bound ephrin family ligands residing on adjacent cells, leading to contact-dependent bidirectional signaling into neighboring cells. The signaling pathway downstream of the receptor is referred to as forward signaling while the signaling pathway downstream of the ephrin ligand is referred to as reverse signaling. Highly promiscuous for ephrin-A ligands it binds preferentially EFNA5. Upon activation by EFNA5 regulates cell-cell adhesion, cytoskeletal organization and cell migration. Plays a role in cardiac cells migration and differentiation and regulates the formation of the atrioventricular canal and septum during development probably through activation by EFNA1. Involved in the retinotectal mapping of neurons. May also control the segregation but not the guidance of motor and sensory axons during neuromuscular circuit development. This is Ephrin type-A receptor 3 (Epha3) from Mus musculus (Mouse).